The following is a 431-amino-acid chain: UDP-N-acetylmuramate--L-alanine ligase (431 aa).

Position 108–114 (108–114) interacts with ATP; sequence GSHGKTS.

It belongs to the MurCDEF family.

Its subcellular location is the cytoplasm. The catalysed reaction is UDP-N-acetyl-alpha-D-muramate + L-alanine + ATP = UDP-N-acetyl-alpha-D-muramoyl-L-alanine + ADP + phosphate + H(+). The protein operates within cell wall biogenesis; peptidoglycan biosynthesis. Its function is as follows. Cell wall formation. The protein is UDP-N-acetylmuramate--L-alanine ligase of Macrococcus caseolyticus (strain JCSC5402) (Macrococcoides caseolyticum).